Here is a 487-residue protein sequence, read N- to C-terminus: Beta-barrel assembly-enhancing protease (487 aa).

Positions 1–27 are cleaved as a signal peptide; that stretch reads MFRQLKKNLVATLIAAMTIGQVAPAFA. His136 lines the Zn(2+) pocket. Glu137 is an active-site residue. Positions 140 and 201 each coordinate Zn(2+). Residue Asp205 is the Proton donor of the active site. TPR repeat units follow at residues 309-342, 344-376, 377-409, and 427-460; these read RAAQYGRALQAMEANKYDEARKTLQPLLAAEPGN, WYLDLATDIDLGQNKANEAINRLKNARDLRTNP, VLQLNLANAYLQGGQPQEAANILNRYTFNNKDD, and DQELAARAEGYALAGRLDQAISLLSSASSQVKLG.

This sequence belongs to the peptidase M48 family. BepA subfamily. The cofactor is Zn(2+).

It is found in the periplasm. In terms of biological role, functions both as a chaperone and a metalloprotease. Maintains the integrity of the outer membrane by promoting either the assembly or the elimination of outer membrane proteins, depending on their folding state. In Escherichia coli O157:H7, this protein is Beta-barrel assembly-enhancing protease.